We begin with the raw amino-acid sequence, 84 residues long: LYR motif-containing protein 5B (84 aa).

The protein belongs to the complex I LYR family.

This Danio rerio (Zebrafish) protein is LYR motif-containing protein 5B (lyrm5b).